Consider the following 265-residue polypeptide: tRNA pseudouridine synthase A (265 aa).

Residue Asp-53 is the Nucleophile of the active site. Tyr-111 provides a ligand contact to substrate.

The protein belongs to the tRNA pseudouridine synthase TruA family. As to quaternary structure, homodimer.

The enzyme catalyses uridine(38/39/40) in tRNA = pseudouridine(38/39/40) in tRNA. Functionally, formation of pseudouridine at positions 38, 39 and 40 in the anticodon stem and loop of transfer RNAs. This chain is tRNA pseudouridine synthase A, found in Acinetobacter baumannii (strain ATCC 17978 / DSM 105126 / CIP 53.77 / LMG 1025 / NCDC KC755 / 5377).